Here is a 314-residue protein sequence, read N- to C-terminus: Malate dehydrogenase (314 aa).

NAD(+)-binding positions include glycine 11–glycine 16 and aspartate 35. 2 residues coordinate substrate: arginine 84 and arginine 90. NAD(+)-binding positions include asparagine 97 and isoleucine 120–asparagine 122. Asparagine 122 and arginine 153 together coordinate substrate. The active-site Proton acceptor is histidine 177.

The protein belongs to the LDH/MDH superfamily. MDH type 3 family.

It carries out the reaction (S)-malate + NAD(+) = oxaloacetate + NADH + H(+). Its function is as follows. Catalyzes the reversible oxidation of malate to oxaloacetate. The chain is Malate dehydrogenase from Rickettsia prowazekii (strain Madrid E).